Reading from the N-terminus, the 701-residue chain is Elongation factor G (701 aa).

In terms of domain architecture, tr-type G spans 8 to 291 (SRYRNIGIVA…AVIDYLPAPV (284 aa)). Residues 17–24 (AHVDAGKT), 89–93 (DTPGH), and 143–146 (NKMD) each bind GTP.

It belongs to the TRAFAC class translation factor GTPase superfamily. Classic translation factor GTPase family. EF-G/EF-2 subfamily.

The protein resides in the cytoplasm. In terms of biological role, catalyzes the GTP-dependent ribosomal translocation step during translation elongation. During this step, the ribosome changes from the pre-translocational (PRE) to the post-translocational (POST) state as the newly formed A-site-bound peptidyl-tRNA and P-site-bound deacylated tRNA move to the P and E sites, respectively. Catalyzes the coordinated movement of the two tRNA molecules, the mRNA and conformational changes in the ribosome. The sequence is that of Elongation factor G from Pseudomonas fluorescens (strain SBW25).